Here is a 166-residue protein sequence, read N- to C-terminus: MSRYGKNLVHYIIVEHDDQRGQKPIDDDDEKNFYYHCSFTFETFFRATAFLLAPAVCAVREVPCRLTRTRYNATEYIEGYGWMISLQQGLGVAEFYRPWPLSVQLQRYTTPSRRSRFAVLTPQRKCHQNEANGQDLSLLILLSRIYPLCSNTSQTRRVAARKGKLS.

In Saccharomyces cerevisiae (strain ATCC 204508 / S288c) (Baker's yeast), this protein is Protein UTR5 (UTR5).